The following is a 448-amino-acid chain: Exodeoxyribonuclease 7 large subunit (448 aa).

It belongs to the XseA family. Heterooligomer composed of large and small subunits.

It localises to the cytoplasm. The enzyme catalyses Exonucleolytic cleavage in either 5'- to 3'- or 3'- to 5'-direction to yield nucleoside 5'-phosphates.. Bidirectionally degrades single-stranded DNA into large acid-insoluble oligonucleotides, which are then degraded further into small acid-soluble oligonucleotides. This chain is Exodeoxyribonuclease 7 large subunit, found in Enterococcus faecalis (strain ATCC 700802 / V583).